We begin with the raw amino-acid sequence, 167 residues long: S-ribosylhomocysteine lyase (167 aa).

The Fe cation site is built by H54, H58, and C128.

This sequence belongs to the LuxS family. Homodimer. It depends on Fe cation as a cofactor.

The catalysed reaction is S-(5-deoxy-D-ribos-5-yl)-L-homocysteine = (S)-4,5-dihydroxypentane-2,3-dione + L-homocysteine. In terms of biological role, involved in the synthesis of autoinducer 2 (AI-2) which is secreted by bacteria and is used to communicate both the cell density and the metabolic potential of the environment. The regulation of gene expression in response to changes in cell density is called quorum sensing. Catalyzes the transformation of S-ribosylhomocysteine (RHC) to homocysteine (HC) and 4,5-dihydroxy-2,3-pentadione (DPD). This Haemophilus influenzae (strain PittEE) protein is S-ribosylhomocysteine lyase.